The following is a 652-amino-acid chain: DNA ligase (652 aa).

Residues 29–33 (DAEYD), 78–79 (SL), and Glu-107 contribute to the NAD(+) site. Catalysis depends on Lys-109, which acts as the N6-AMP-lysine intermediate. Positions 130, 164, 278, and 302 each coordinate NAD(+). Positions 395, 398, 413, and 418 each coordinate Zn(2+). In terms of domain architecture, BRCT spans 577 to 652 (ADDAILSGKT…VKDEAWLLDL (76 aa)).

Belongs to the NAD-dependent DNA ligase family. LigA subfamily. Mg(2+) is required as a cofactor. Requires Mn(2+) as cofactor.

It carries out the reaction NAD(+) + (deoxyribonucleotide)n-3'-hydroxyl + 5'-phospho-(deoxyribonucleotide)m = (deoxyribonucleotide)n+m + AMP + beta-nicotinamide D-nucleotide.. Functionally, DNA ligase that catalyzes the formation of phosphodiester linkages between 5'-phosphoryl and 3'-hydroxyl groups in double-stranded DNA using NAD as a coenzyme and as the energy source for the reaction. It is essential for DNA replication and repair of damaged DNA. The polypeptide is DNA ligase (Streptococcus thermophilus (strain CNRZ 1066)).